The primary structure comprises 506 residues: Procardosin-B (506 aa).

The first 24 residues, 1–24, serve as a signal peptide directing secretion; the sequence is MGTPIKASLLALFLFFLLSPTAFS. A propeptide spanning residues 25–70 is cleaved from the precursor; that stretch reads VSNGGLLRVGLKKRKVDRLDQLRAHGVHMLGNARKDFGFRRTLSDS. The Peptidase A1 domain maps to 85–503; the sequence is YYGEIGIGTP…DYGKLRVGFA (419 aa). Aspartate 103 is a catalytic residue. Cysteine 116 and cysteine 122 are disulfide-bonded. Residues asparagine 139 and asparagine 252 are each glycosylated (N-linked (GlcNAc...) asparagine). The cysteines at positions 281 and 285 are disulfide-linked. Residue aspartate 290 is part of the active site. In terms of domain architecture, Saposin B-type spans 315-417; the sequence is VLNQQCKTLV…NEVCDQLPTS (103 aa). 4 cysteine pairs are disulfide-bonded: cysteine 320/cysteine 411, cysteine 345/cysteine 383, cysteine 351/cysteine 380, and cysteine 425/cysteine 462. N-linked (GlcNAc...) asparagine glycosylation occurs at asparagine 397.

The protein belongs to the peptidase A1 family. Heterodimer of a light chain and a heavy chain. An intermediate form is produced first, and undergoes proteolytic processing to remove the internal plant-specific insert (PSI) and the propeptide. Detected in pistils, but not in seeds, bracts, midribs, roots, leaves or stamen extracts. Detected in seeds. In stigmas and styles, detected in the transmitting tissue and in contiguous subepidermal layers at the longitudenal grooves of the stigma (at protein level).

It localises to the microsome membrane. It is found in the protein storage vacuole. The protein resides in the secreted. Its subcellular location is the cell wall. The protein localises to the extracellular space. It localises to the extracellular matrix. Its activity is regulated as follows. Inhibited by the specific aspartic proteinase inhibitors diazoacetyl-noleucine methyl ester and pepstatin. Aspartic protease. Cleaves alpha-lactalbumin but not beta-lactoglobulin. This Cynara cardunculus (Cardoon) protein is Procardosin-B.